A 318-amino-acid polypeptide reads, in one-letter code: NADH-ubiquinone oxidoreductase chain 1 (318 aa).

The next 8 helical transmembrane spans lie at 2–22, 69–89, 100–120, 147–167, 171–191, 222–242, 253–273, and 294–314; these read PMIN…FLML, ALYI…WTPL, LGLL…LWSG, AIIL…TLIT, HIWL…STLA, LFFM…TMIF, ELYT…FLWI, and LPLT…IASI.

The protein belongs to the complex I subunit 1 family. Core subunit of respiratory chain NADH dehydrogenase (Complex I) which is composed of 45 different subunits.

It is found in the mitochondrion inner membrane. The enzyme catalyses a ubiquinone + NADH + 5 H(+)(in) = a ubiquinol + NAD(+) + 4 H(+)(out). Core subunit of the mitochondrial membrane respiratory chain NADH dehydrogenase (Complex I) which catalyzes electron transfer from NADH through the respiratory chain, using ubiquinone as an electron acceptor. Essential for the catalytic activity and assembly of complex I. The sequence is that of NADH-ubiquinone oxidoreductase chain 1 (MT-ND1) from Hylobates lar (Lar gibbon).